A 367-amino-acid polypeptide reads, in one-letter code: Probable thylakoidal processing peptidase 2, chloroplastic (367 aa).

The transit peptide at 1 to 68 (MAIRVTFTYS…NTWGPSSGPR (68 aa)) directs the protein to the chloroplast. The interval 53 to 72 (DKSPGSNTWGPSSGPRARPA) is disordered. The segment covering 62–72 (GPSSGPRARPA) has biased composition (low complexity). A helical membrane pass occupies residues 185–205 (EDAKAAFTAVTVSLLFRSALA). Residues 206-367 (EPKSIPSTSM…VSQKRAVDVS (162 aa)) lie on the Lumenal, thylakoid side of the membrane. The active site involves Ser214.

The protein belongs to the peptidase S26 family.

The protein resides in the plastid. Its subcellular location is the chloroplast thylakoid membrane. The enzyme catalyses Cleavage of hydrophobic, N-terminal signal or leader sequences from secreted and periplasmic proteins.. Cleaves the thylakoid-transfer domain from a chloroplast protein. The protein is Probable thylakoidal processing peptidase 2, chloroplastic (TPP2) of Arabidopsis thaliana (Mouse-ear cress).